The following is a 260-amino-acid chain: Ribosomal RNA small subunit methyltransferase A (260 aa).

5 residues coordinate S-adenosyl-L-methionine: Leu-23, Gly-48, Glu-69, Asp-94, and Asn-110.

Belongs to the class I-like SAM-binding methyltransferase superfamily. rRNA adenine N(6)-methyltransferase family. RsmA subfamily.

Its subcellular location is the cytoplasm. It catalyses the reaction adenosine(1518)/adenosine(1519) in 16S rRNA + 4 S-adenosyl-L-methionine = N(6)-dimethyladenosine(1518)/N(6)-dimethyladenosine(1519) in 16S rRNA + 4 S-adenosyl-L-homocysteine + 4 H(+). Specifically dimethylates two adjacent adenosines (A1518 and A1519) in the loop of a conserved hairpin near the 3'-end of 16S rRNA in the 30S particle. May play a critical role in biogenesis of 30S subunits. In Thermotoga neapolitana (strain ATCC 49049 / DSM 4359 / NBRC 107923 / NS-E), this protein is Ribosomal RNA small subunit methyltransferase A.